The primary structure comprises 486 residues: CUGBP Elav-like family member 4 (486 aa).

The sufficient for RNA-binding and MSE-dependent splicing activity stretch occupies residues 1–298; the sequence is MYIKMATLAN…AAFAAAQMQQ (298 aa). Residues 18-28 are compositionally biased toward polar residues; sequence LSTNGLGSSPG. 2 disordered regions span residues 18–39 and 121–149; these read LSTNGLGSSPGSAGHMNGLSHS and LPGMNRPIQVKPADSESRGGSSCLRQPPS. The region spanning 54-135 is the RRM 1 domain; it reads IKLFIGQIPR…RPIQVKPADS (82 aa). Polar residues predominate over residues 138–149; the sequence is RGGSSCLRQPPS. The RRM 2 domain maps to 152 to 232; the sequence is RKLFVGMLNK…SSLVVKFADT (81 aa). Residues 239–258 are necessary for TNNT2 exon 5 inclusion; that stretch reads RRMQQMAGQMGMFNPMAIPF. In terms of domain architecture, RRM 3 spans 404 to 479; sequence PQPPPMIPQQ…KRLKVQLKRP (76 aa).

This sequence belongs to the CELF/BRUNOL family. As to expression, ubiquitous. Strongly expressed in the cerebellum, hippocampus, amygdala, temporal and frontal cortex and frontal lobes.

The protein localises to the nucleus. Its subcellular location is the cytoplasm. In terms of biological role, RNA-binding protein implicated in the regulation of pre-mRNA alternative splicing. Mediates exon inclusion and/or exclusion in pre-mRNA that are subject to tissue-specific and developmentally regulated alternative splicing. Specifically activates exon 5 inclusion of cardiac isoforms of TNNT2 during heart remodeling at the juvenile to adult transition. Promotes exclusion of both the smooth muscle (SM) and non-muscle (NM) exons in actinin pre-mRNAs. Activates the splicing of MAPT/Tau exon 10. Binds to muscle-specific splicing enhancer (MSE) intronic sites flanking the alternative exon 5 of TNNT2 pre-mRNA. The polypeptide is CUGBP Elav-like family member 4 (CELF4) (Homo sapiens (Human)).